A 411-amino-acid chain; its full sequence is Solute carrier RCH1 (411 aa).

At 1–17 the chain is on the cytoplasmic side; it reads MSLETFRESKAYKWTSK. Residues 18–38 traverse the membrane as a helical segment; the sequence is VISFLIGQWFFIFLGVFIALA. Residues 39–52 lie on the Extracellular side of the membrane; it reads HSYPEFAKQGGTIR. Residues 53–73 traverse the membrane as a helical segment; sequence AEYSIGYGAVAVIFLISGLSM. The Cytoplasmic segment spans residues 74 to 89; that stretch reads STKQLLVNVANWRAHF. A helical transmembrane segment spans residues 90-110; it reads TVLSMSFLVTSAIIYGIASGI. The Extracellular portion of the chain corresponds to 111-120; sequence KASHNGQIDD. Residues 121-141 traverse the membrane as a helical segment; the sequence is WLLIGLIVTHACPTTVSSNVV. At 142–150 the chain is on the cytoplasmic side; it reads MTKQAHGND. The helical transmembrane segment at 151 to 171 threads the bilayer; that stretch reads ILTLCEVFIGNVLGAFITPAL. The Extracellular segment spans residues 172–204; it reads LQMYMRGTWEIGNPSHQTQGDSTVQELYAHTMK. Residues 205-225 form a helical membrane-spanning segment; that stretch reads QLGLSVFVPLFVGQVVQNIFP. Residues 226 to 242 are Cytoplasmic-facing; the sequence is KQTKWCLTTFKLNKVGS. A helical transmembrane segment spans residues 243 to 263; that stretch reads FMLLLIMFQSFSTAFAQHAFT. The Extracellular segment spans residues 264-269; sequence SVSHAS. A helical membrane pass occupies residues 270 to 290; the sequence is IIFLVFFNIGIYLFFTVLTFF. The Cytoplasmic segment spans residues 291-329; that stretch reads YSRPFWILRVFKEEPNESSSKLYRYSYAFFRPFYYNRKD. A helical transmembrane segment spans residues 330–350; sequence TVAVMLCGPAKTAALGVSLVS. Topologically, residues 351 to 361 are extracellular; that stretch reads SQYGSHNPKLG. A helical transmembrane segment spans residues 362–382; the sequence is IILVPLVLYQAEQVMTANVLV. Topologically, residues 383–411 are cytoplasmic; sequence SFMRKWIHAEDKVPEDEETSVGSDNDPKK.

This sequence belongs to the bile acid:sodium symporter (BASS) (TC 2.A.28) family.

The protein resides in the cell membrane. It localises to the bud neck. In terms of biological role, solute carrier protein that negatively regulates the cytosolic homeostasis in response to high levels of extracellular calcium. The protein is Solute carrier RCH1 of Candida albicans (strain SC5314 / ATCC MYA-2876) (Yeast).